We begin with the raw amino-acid sequence, 183 residues long: Probable transcription termination protein NusA (183 aa).

Positions 32 to 98 (DERVAFIVKE…DDVWVKRVGK (67 aa)) constitute a KH domain. Residues 149–183 (RKRAKRPVVKDQQQEQTETKQETDVQQDVKETVKE) are disordered. Residues 156 to 183 (VVKDQQQEQTETKQETDVQQDVKETVKE) show a composition bias toward basic and acidic residues.

This sequence belongs to the NusA family.

The protein localises to the cytoplasm. Functionally, participates in transcription termination. The protein is Probable transcription termination protein NusA of Methanocaldococcus jannaschii (strain ATCC 43067 / DSM 2661 / JAL-1 / JCM 10045 / NBRC 100440) (Methanococcus jannaschii).